The chain runs to 505 residues: UDP-N-acetylmuramyl-tripeptide synthetase (505 aa).

Ser35 serves as a coordination point for UDP-N-acetyl-alpha-D-muramoyl-L-alanyl-D-glutamate. Position 118–124 (118–124 (GTDGKSS)) interacts with ATP. UDP-N-acetyl-alpha-D-muramoyl-L-alanyl-D-glutamate contacts are provided by residues 163-164 (ST), Thr190, and Arg200. Lys232 carries the post-translational modification N6-carboxylysine.

This sequence belongs to the MurCDEF family. MurE subfamily. Post-translationally, carboxylation is probably crucial for Mg(2+) binding and, consequently, for the gamma-phosphate positioning of ATP.

It is found in the cytoplasm. Its pathway is cell wall biogenesis; peptidoglycan biosynthesis. Its function is as follows. Catalyzes the addition of an amino acid to the nucleotide precursor UDP-N-acetylmuramoyl-L-alanyl-D-glutamate (UMAG) in the biosynthesis of bacterial cell-wall peptidoglycan. The protein is UDP-N-acetylmuramyl-tripeptide synthetase of Borreliella afzelii (strain PKo) (Borrelia afzelii).